A 241-amino-acid polypeptide reads, in one-letter code: tRNA pseudouridine synthase A (241 aa).

The Nucleophile role is filled by Asp52. Tyr110 contributes to the substrate binding site.

It belongs to the tRNA pseudouridine synthase TruA family. Homodimer.

It catalyses the reaction uridine(38/39/40) in tRNA = pseudouridine(38/39/40) in tRNA. Functionally, formation of pseudouridine at positions 38, 39 and 40 in the anticodon stem and loop of transfer RNAs. This chain is tRNA pseudouridine synthase A, found in Aquifex aeolicus (strain VF5).